The following is a 214-amino-acid chain: Osteoclast-stimulating factor 1 (214 aa).

One can recognise an SH3 domain in the interval 12–71; it reads GQVKVFRALYTFEPRTPDELYFEEGDILYIADMSDTNWWKGTCKGKTGLIPSNYVAEQAE. 3 ANK repeats span residues 72-101, 105-135, and 139-168; these read SIDNPLHEAAKRGNLSWLRECLENRVGVNG, AGSTALYWGCHGGHKDVVDMLLAQPNIELNQ, and LGDTALHAAAWKGYADIVELLLVKGARTDL.

It localises to the cytoplasm. In terms of biological role, induces bone resorption, acting probably through a signaling cascade which results in the secretion of factor(s) enhancing osteoclast formation and activity. The polypeptide is Osteoclast-stimulating factor 1 (ostf1) (Xenopus laevis (African clawed frog)).